The following is a 105-amino-acid chain: Small ribosomal subunit protein uS10 (105 aa).

It belongs to the universal ribosomal protein uS10 family. In terms of assembly, part of the 30S ribosomal subunit.

Its function is as follows. Involved in the binding of tRNA to the ribosomes. In Rickettsia prowazekii (strain Madrid E), this protein is Small ribosomal subunit protein uS10.